The chain runs to 477 residues: Protein AC142 (477 aa).

Its subcellular location is the host cytoplasm. The protein resides in the host nucleus. It is found in the virion. Required for occlusion-derived virus (ODV) envelopment and subsequent embedding of virions into polyhedra. The polypeptide is Protein AC142 (ORF142) (Autographa californica nuclear polyhedrosis virus (AcMNPV)).